Reading from the N-terminus, the 157-residue chain is Protein MGF 110-13L (157 aa).

Transmembrane regions (helical) follow at residues 14–34 (QYCLYFIIGIAYTDCFICALC) and 39–59 (LSTTMKLFVLLSILVWLAQPV).

The protein belongs to the asfivirus MGF 110 family.

It is found in the host membrane. Its function is as follows. Plays a role in virus cell tropism, and may be required for efficient virus replication in macrophages. This is Protein MGF 110-13L from African swine fever virus (isolate Tick/Malawi/Lil 20-1/1983) (ASFV).